A 546-amino-acid chain; its full sequence is Probable ganciclovir kinase (546 aa).

Residues 1 to 11 (MEQLKTPQNQK) are compositionally biased toward polar residues. The disordered stretch occupies residues 1–29 (MEQLKTPQNQKTRPRNMLPKKKGKELKKR). The segment covering 12–29 (TRPRNMLPKKKGKELKKR) has biased composition (basic residues). ATP contacts are provided by residues 185-193 (LGSGSYGMV) and Lys-202. The Proton acceptor role is filled by Asp-297.

This sequence belongs to the protein kinase superfamily. Tyr protein kinase family. HCMV ganciclovir subfamily.

Phosphorylates the antiviral nucleoside analog ganciclovir. This Human herpesvirus 7 (strain JI) (HHV-7) protein is Probable ganciclovir kinase (U69).